We begin with the raw amino-acid sequence, 93 residues long: Small ribosomal subunit protein uS19 (93 aa).

Belongs to the universal ribosomal protein uS19 family.

In terms of biological role, protein S19 forms a complex with S13 that binds strongly to the 16S ribosomal RNA. This chain is Small ribosomal subunit protein uS19, found in Lactobacillus helveticus (strain DPC 4571).